Reading from the N-terminus, the 55-residue chain is Myrmicitoxin(1)-Pr6b (55 aa).

Positions 1–22 (MKIIYAFLLIAVVAFMGSGIMA) are cleaved as a signal peptide. A propeptide spanning residues 23 to 29 (ESLAEAI) is cleaved from the precursor.

It belongs to the formicidae venom clade 4 family. Expressed by the venom gland.

Its subcellular location is the secreted. In terms of biological role, probable neurotoxin. In Pogonomyrmex rugosus (Desert harvester ant), this protein is Myrmicitoxin(1)-Pr6b.